The following is a 275-amino-acid chain: Anamorsin homolog (275 aa).

The tract at residues 1 to 147 is N-terminal SAM-like domain; sequence MTSASIHIGS…QSASSAAATG (147 aa). A linker region spans residues 148 to 183; sequence RINLGGAKTKVKLSLDDDDDDQLIDEDDLLNGGGGM. Residues cysteine 203, cysteine 209, cysteine 212, and cysteine 214 each contribute to the [2Fe-2S] cluster site. The interval 203-214 is fe-S binding site A; sequence CGGRKACDNCTC. Residues cysteine 238, cysteine 241, cysteine 249, and cysteine 252 each contribute to the [4Fe-4S] cluster site. Short sequence motifs (cx2C motif) lie at residues 238 to 241 and 249 to 252; these read CGNC and CAGC. The tract at residues 238–252 is fe-S binding site B; the sequence is CGNCAKGDAFRCAGC.

This sequence belongs to the anamorsin family. As to quaternary structure, monomer. It depends on [2Fe-2S] cluster as a cofactor. [4Fe-4S] cluster serves as cofactor.

The protein resides in the cytoplasm. Its subcellular location is the mitochondrion intermembrane space. Functionally, component of the cytosolic iron-sulfur (Fe-S) protein assembly (CIA) machinery. Required for the maturation of extramitochondrial Fe-S proteins. Part of an electron transfer chain functioning in an early step of cytosolic Fe-S biogenesis, facilitating the de novo assembly of a [4Fe-4S] cluster on the cytosolic Fe-S scaffold complex. Electrons are transferred from NADPH via a FAD- and FMN-containing diflavin oxidoreductase. Together with the diflavin oxidoreductase, also required for the assembly of the diferric tyrosyl radical cofactor of ribonucleotide reductase (RNR), probably by providing electrons for reduction during radical cofactor maturation in the catalytic small subunit. The chain is Anamorsin homolog from Thalassiosira pseudonana (Marine diatom).